Consider the following 300-residue polypeptide: NAD kinase (300 aa).

The active-site Proton acceptor is the Asp-75. Residues 75–76 (DG), 149–150 (ND), Arg-177, Asp-179, 190–195 (TAYALS), Ala-214, and Gln-248 contribute to the NAD(+) site.

Belongs to the NAD kinase family. It depends on a divalent metal cation as a cofactor.

It localises to the cytoplasm. The catalysed reaction is NAD(+) + ATP = ADP + NADP(+) + H(+). Functionally, involved in the regulation of the intracellular balance of NAD and NADP, and is a key enzyme in the biosynthesis of NADP. Catalyzes specifically the phosphorylation on 2'-hydroxyl of the adenosine moiety of NAD to yield NADP. The protein is NAD kinase of Burkholderia cenocepacia (strain HI2424).